The following is a 331-amino-acid chain: D-alanine--D-alanine ligase (331 aa).

Positions 116–316 (KRLWQTHSLP…YEDFVLQLAA (201 aa)) constitute an ATP-grasp domain. 142 to 197 (ADRLGLPLIVKPAREGSSIGLTKVTSVAELPAAYEKAARLDRDVMAEQFIDGDELT) serves as a coordination point for ATP. Positions 269, 283, and 285 each coordinate Mg(2+).

Belongs to the D-alanine--D-alanine ligase family. Mg(2+) serves as cofactor. It depends on Mn(2+) as a cofactor.

It is found in the cytoplasm. The catalysed reaction is 2 D-alanine + ATP = D-alanyl-D-alanine + ADP + phosphate + H(+). It participates in cell wall biogenesis; peptidoglycan biosynthesis. Its function is as follows. Cell wall formation. This is D-alanine--D-alanine ligase from Ralstonia nicotianae (strain ATCC BAA-1114 / GMI1000) (Ralstonia solanacearum).